Here is a 700-residue protein sequence, read N- to C-terminus: Ribonucleoside-diphosphate reductase subunit alpha (700 aa).

Residues threonine 153, 169-170 (SC), glycine 198, 380-384 (NLCSE), and 580-584 (PTGSI) each bind substrate. Cysteine 170 and cysteine 409 are joined by a disulfide. The active-site Proton acceptor is the asparagine 380. The Cysteine radical intermediate role is filled by cysteine 382. Glutamate 384 serves as the catalytic Proton acceptor.

This sequence belongs to the ribonucleoside diphosphate reductase large chain family. In terms of assembly, tetramer of two alpha and two beta subunits.

It carries out the reaction a 2'-deoxyribonucleoside 5'-diphosphate + [thioredoxin]-disulfide + H2O = a ribonucleoside 5'-diphosphate + [thioredoxin]-dithiol. Under complex allosteric control mediated by deoxynucleoside triphosphates and ATP binding. The type of nucleotide bound at the specificity site determines substrate preference. It seems probable that ATP makes the enzyme reduce CDP and UDP, dGTP favors ADP reduction and dTTP favors GDP reduction. Its function is as follows. Provides the precursors necessary for DNA synthesis. Catalyzes the biosynthesis of deoxyribonucleotides from the corresponding ribonucleotides. This Bacillus subtilis (strain 168) protein is Ribonucleoside-diphosphate reductase subunit alpha.